Consider the following 676-residue polypeptide: Ribonuclease R (676 aa).

One can recognise an RNB domain in the interval 207–527 (RKDLRDLLCF…LIVHRLLFNP (321 aa)). An S1 motif domain is found at 566–651 (NKFLQEQPKT…LTQKIVWSIA (86 aa)). The interval 656–676 (DKPKKIKKTPSKKKGTKKRAS) is disordered. The span at 659 to 676 (KKIKKTPSKKKGTKKRAS) shows a compositional bias: basic residues.

Belongs to the RNR ribonuclease family. RNase R subfamily.

Its subcellular location is the cytoplasm. The enzyme catalyses Exonucleolytic cleavage in the 3'- to 5'-direction to yield nucleoside 5'-phosphates.. Its function is as follows. 3'-5' exoribonuclease that releases 5'-nucleoside monophosphates and is involved in maturation of structured RNAs. In Chlamydia pneumoniae (Chlamydophila pneumoniae), this protein is Ribonuclease R.